The following is a 365-amino-acid chain: tRNA 2-selenouridine synthase (365 aa).

The 124-residue stretch at 15–138 (LVNDHPIMDA…MRQFLIETID (124 aa)) folds into the Rhodanese domain. Cysteine 98 functions as the S-selanylcysteine intermediate in the catalytic mechanism.

Belongs to the SelU family. Monomer.

It catalyses the reaction 5-methylaminomethyl-2-thiouridine(34) in tRNA + selenophosphate + (2E)-geranyl diphosphate + H2O + H(+) = 5-methylaminomethyl-2-selenouridine(34) in tRNA + (2E)-thiogeraniol + phosphate + diphosphate. The enzyme catalyses 5-methylaminomethyl-2-thiouridine(34) in tRNA + (2E)-geranyl diphosphate = 5-methylaminomethyl-S-(2E)-geranyl-thiouridine(34) in tRNA + diphosphate. The catalysed reaction is 5-methylaminomethyl-S-(2E)-geranyl-thiouridine(34) in tRNA + selenophosphate + H(+) = 5-methylaminomethyl-2-(Se-phospho)selenouridine(34) in tRNA + (2E)-thiogeraniol. It carries out the reaction 5-methylaminomethyl-2-(Se-phospho)selenouridine(34) in tRNA + H2O = 5-methylaminomethyl-2-selenouridine(34) in tRNA + phosphate. Its function is as follows. Involved in the post-transcriptional modification of the uridine at the wobble position (U34) of tRNA(Lys), tRNA(Glu) and tRNA(Gln). Catalyzes the conversion of 2-thiouridine (S2U-RNA) to 2-selenouridine (Se2U-RNA). Acts in a two-step process involving geranylation of 2-thiouridine (S2U) to S-geranyl-2-thiouridine (geS2U) and subsequent selenation of the latter derivative to 2-selenouridine (Se2U) in the tRNA chain. This Shewanella pealeana (strain ATCC 700345 / ANG-SQ1) protein is tRNA 2-selenouridine synthase.